Consider the following 440-residue polypeptide: Ribosomal protein uS12 methylthiotransferase RimO (440 aa).

Residues 8-118 form the MTTase N-terminal domain; that stretch reads PTVGFVSLGC…VMGIVHTHLP (111 aa). Residues cysteine 17, cysteine 53, cysteine 82, cysteine 149, cysteine 153, and cysteine 156 each coordinate [4Fe-4S] cluster. The Radical SAM core domain occupies 135–372; it reads LTPDHFAYLK…MQVQEDISAD (238 aa). A TRAM domain is found at 375 to 440; that stretch reads AAKIDTVIQV…DHHDLYAQVV (66 aa).

It belongs to the methylthiotransferase family. RimO subfamily. The cofactor is [4Fe-4S] cluster.

The protein resides in the cytoplasm. It catalyses the reaction L-aspartate(89)-[ribosomal protein uS12]-hydrogen + (sulfur carrier)-SH + AH2 + 2 S-adenosyl-L-methionine = 3-methylsulfanyl-L-aspartate(89)-[ribosomal protein uS12]-hydrogen + (sulfur carrier)-H + 5'-deoxyadenosine + L-methionine + A + S-adenosyl-L-homocysteine + 2 H(+). Its function is as follows. Catalyzes the methylthiolation of an aspartic acid residue of ribosomal protein uS12. The chain is Ribosomal protein uS12 methylthiotransferase RimO from Dechloromonas aromatica (strain RCB).